The sequence spans 284 residues: D-tagatose-1,6-bisphosphate aldolase subunit GatY (284 aa).

Catalysis depends on D82, which acts as the Proton donor. Residues H83 and H180 each contribute to the Zn(2+) site. G181 is a binding site for dihydroxyacetone phosphate. H208 lines the Zn(2+) pocket. Dihydroxyacetone phosphate-binding positions include 209-211 (GAS) and 230-233 (NVAT).

It belongs to the class II fructose-bisphosphate aldolase family. TagBP aldolase GatY subfamily. In terms of assembly, forms a complex with GatZ. Zn(2+) is required as a cofactor.

It catalyses the reaction D-tagatofuranose 1,6-bisphosphate = D-glyceraldehyde 3-phosphate + dihydroxyacetone phosphate. Its pathway is carbohydrate metabolism; D-tagatose 6-phosphate degradation; D-glyceraldehyde 3-phosphate and glycerone phosphate from D-tagatose 6-phosphate: step 2/2. In terms of biological role, catalytic subunit of the tagatose-1,6-bisphosphate aldolase GatYZ, which catalyzes the reversible aldol condensation of dihydroxyacetone phosphate (DHAP or glycerone-phosphate) with glyceraldehyde 3-phosphate (G3P) to produce tagatose 1,6-bisphosphate (TBP). Requires GatZ subunit for full activity and stability. Is involved in the catabolism of galactitol. This chain is D-tagatose-1,6-bisphosphate aldolase subunit GatY, found in Escherichia coli O6:K15:H31 (strain 536 / UPEC).